The sequence spans 185 residues: Ribosome-recycling factor (185 aa).

This sequence belongs to the RRF family.

The protein localises to the cytoplasm. In terms of biological role, responsible for the release of ribosomes from messenger RNA at the termination of protein biosynthesis. May increase the efficiency of translation by recycling ribosomes from one round of translation to another. The chain is Ribosome-recycling factor from Mycobacteroides abscessus (strain ATCC 19977 / DSM 44196 / CCUG 20993 / CIP 104536 / JCM 13569 / NCTC 13031 / TMC 1543 / L948) (Mycobacterium abscessus).